Reading from the N-terminus, the 287-residue chain is Nucleotide-binding protein HEAR2885 (287 aa).

ATP is bound at residue 8-15; that stretch reads GISGSGKS. 57–60 contributes to the GTP binding site; that stretch reads DVRS.

The protein belongs to the RapZ-like family.

Its function is as follows. Displays ATPase and GTPase activities. This is Nucleotide-binding protein HEAR2885 from Herminiimonas arsenicoxydans.